The chain runs to 367 residues: tRNA-specific 2-thiouridylase MnmA (367 aa).

ATP-binding positions include 10–17 and M36; that span reads AMSGGVDS. C106 acts as the Nucleophile in catalysis. C106 and C204 are oxidised to a cystine. Residue G130 coordinates ATP. Positions 154 to 156 are interaction with tRNA; sequence KDQ. C204 (cysteine persulfide intermediate) is an active-site residue. An interaction with tRNA region spans residues 310 to 311; it reads RY.

It belongs to the MnmA/TRMU family.

The protein resides in the cytoplasm. It catalyses the reaction S-sulfanyl-L-cysteinyl-[protein] + uridine(34) in tRNA + AH2 + ATP = 2-thiouridine(34) in tRNA + L-cysteinyl-[protein] + A + AMP + diphosphate + H(+). Catalyzes the 2-thiolation of uridine at the wobble position (U34) of tRNA, leading to the formation of s(2)U34. This chain is tRNA-specific 2-thiouridylase MnmA, found in Desulforamulus reducens (strain ATCC BAA-1160 / DSM 100696 / MI-1) (Desulfotomaculum reducens).